The chain runs to 156 residues: RNA pyrophosphohydrolase (156 aa).

The 143-residue stretch at Asn-6–Lys-148 folds into the Nudix hydrolase domain. The Nudix box motif lies at Gly-43–Gly-64.

Belongs to the Nudix hydrolase family. RppH subfamily. A divalent metal cation serves as cofactor.

Accelerates the degradation of transcripts by removing pyrophosphate from the 5'-end of triphosphorylated RNA, leading to a more labile monophosphorylated state that can stimulate subsequent ribonuclease cleavage. The sequence is that of RNA pyrophosphohydrolase from Campylobacter jejuni subsp. jejuni serotype O:2 (strain ATCC 700819 / NCTC 11168).